We begin with the raw amino-acid sequence, 88 residues long: Large ribosomal subunit protein bL27 (88 aa).

Positions 1–24 (MAHKKGTGSTRNGRDSNSKRLGVK) are disordered.

It belongs to the bacterial ribosomal protein bL27 family.

The sequence is that of Large ribosomal subunit protein bL27 from Prochlorococcus marinus (strain MIT 9303).